The following is a 315-amino-acid chain: Methionyl-tRNA formyltransferase (315 aa).

Residue 113 to 116 coordinates (6S)-5,6,7,8-tetrahydrofolate; the sequence is SLLP.

This sequence belongs to the Fmt family.

The catalysed reaction is L-methionyl-tRNA(fMet) + (6R)-10-formyltetrahydrofolate = N-formyl-L-methionyl-tRNA(fMet) + (6S)-5,6,7,8-tetrahydrofolate + H(+). In terms of biological role, attaches a formyl group to the free amino group of methionyl-tRNA(fMet). The formyl group appears to play a dual role in the initiator identity of N-formylmethionyl-tRNA by promoting its recognition by IF2 and preventing the misappropriation of this tRNA by the elongation apparatus. The sequence is that of Methionyl-tRNA formyltransferase from Shigella sonnei (strain Ss046).